The following is a 230-amino-acid chain: ATP-dependent dethiobiotin synthetase BioD (230 aa).

12–17 (DIGKTH) is an ATP binding site. Threonine 16 serves as a coordination point for Mg(2+). Residue lysine 37 is part of the active site. Substrate is bound at residue serine 41. ATP-binding positions include aspartate 52, 115–118 (EGAG), and 175–176 (SE). Residues aspartate 52 and glutamate 115 each contribute to the Mg(2+) site.

It belongs to the dethiobiotin synthetase family. As to quaternary structure, homodimer. The cofactor is Mg(2+).

The protein localises to the cytoplasm. The catalysed reaction is (7R,8S)-7,8-diammoniononanoate + CO2 + ATP = (4R,5S)-dethiobiotin + ADP + phosphate + 3 H(+). It participates in cofactor biosynthesis; biotin biosynthesis; biotin from 7,8-diaminononanoate: step 1/2. Functionally, catalyzes a mechanistically unusual reaction, the ATP-dependent insertion of CO2 between the N7 and N8 nitrogen atoms of 7,8-diaminopelargonic acid (DAPA, also called 7,8-diammoniononanoate) to form a ureido ring. In Caulobacter sp. (strain K31), this protein is ATP-dependent dethiobiotin synthetase BioD.